A 421-amino-acid polypeptide reads, in one-letter code: BEN domain-containing protein 5 (421 aa).

Position 133 is an N6-acetyllysine (Lys133). Positions 180–243 form a coiled coil; that stretch reads RALYEELLRN…LNRRLQDVLL (64 aa). A Glycyl lysine isopeptide (Lys-Gly) (interchain with G-Cter in SUMO2) cross-link involves residue Lys258. The region spanning 302–408 is the BEN domain; the sequence is GSGIWVDEEK…EKIMDINKSC (107 aa).

Its function is as follows. Acts as a transcriptional repressor. This chain is BEN domain-containing protein 5 (Bend5), found in Mus musculus (Mouse).